A 99-amino-acid chain; its full sequence is DNA-binding protein HU (99 aa).

The segment at 67–86 is disordered; it reads REGRNPKTGAKMKIDAYNQP.

Belongs to the bacterial histone-like protein family. Homodimer.

In terms of biological role, histone-like DNA-binding protein which is capable of wrapping DNA to stabilize it, and thus to prevent its denaturation under extreme environmental conditions. The chain is DNA-binding protein HU (hup) from Rickettsia felis (strain ATCC VR-1525 / URRWXCal2) (Rickettsia azadi).